The primary structure comprises 327 residues: Chlorophenol reductase (327 aa).

Positions Met-1–Ala-24 are cleaved as a signal peptide. Residues Thr-65 to Val-110 enclose the LysM domain.

Requires cob(I)alamin as cofactor.

It localises to the secreted. It is found in the cell wall. The protein localises to the cell membrane. Its activity is regulated as follows. Inhibited by sulfide and to a lesser extent by nitrite. Reductive dechlorination of ortho-chlorophenols. Dechlorinates in the ortho position with respect to the hydroxyl group. This chain is Chlorophenol reductase, found in Desulfitobacterium hafniense (Desulfitobacterium frappieri).